The chain runs to 959 residues: Protein SEY1 homolog 1 (959 aa).

Over 1 to 767 (MQESDVFHNQ…ELAAITVHSK (767 aa)) the chain is Cytoplasmic. Residues 9 to 86 (NQLRVEMLKK…EEEKKEKENY (78 aa)) adopt a coiled-coil conformation. The segment at 62–81 (EEKENMKVEEEEIKEEEEKK) is disordered. In terms of domain architecture, GB1/RHD3-type G spans 123 to 340 (GFNYNMLSIL…NQNTYFRPIY (218 aa)). 133-140 (GPQNSGKS) is a GTP binding site. Residues 768 to 788 (TPMWLILLIAFLSFDNIVYVF) traverse the membrane as a helical segment. Over 789-791 (KSP) the chain is Lumenal. Residues 792 to 812 (TLLALTLIIIGIIYSLNKIGY) traverse the membrane as a helical segment. Residues 813 to 959 (AYLIDSVISY…LNKIKEANEF (147 aa)) lie on the Cytoplasmic side of the membrane. Positions 849 to 868 (EAPKRKRPQKKTQDDKPKSS) are disordered.

The protein belongs to the TRAFAC class dynamin-like GTPase superfamily. GB1/RHD3 GTPase family. RHD3 subfamily.

Its subcellular location is the endoplasmic reticulum membrane. Probable GTP-binding protein that may be involved in cell development. The protein is Protein SEY1 homolog 1 of Entamoeba histolytica (strain ATCC 30459 / HM-1:IMSS / ABRM).